Consider the following 615-residue polypeptide: 1-deoxy-D-xylulose-5-phosphate synthase (615 aa).

Thiamine diphosphate-binding positions include His76 and 117-119; that span reads GHS. Residue Asp148 coordinates Mg(2+). Residues 149-150, Asn177, Tyr284, and Glu365 contribute to the thiamine diphosphate site; that span reads GA. Asn177 provides a ligand contact to Mg(2+).

The protein belongs to the transketolase family. DXPS subfamily. Homodimer. Requires Mg(2+) as cofactor. The cofactor is thiamine diphosphate.

The enzyme catalyses D-glyceraldehyde 3-phosphate + pyruvate + H(+) = 1-deoxy-D-xylulose 5-phosphate + CO2. It participates in metabolic intermediate biosynthesis; 1-deoxy-D-xylulose 5-phosphate biosynthesis; 1-deoxy-D-xylulose 5-phosphate from D-glyceraldehyde 3-phosphate and pyruvate: step 1/1. Catalyzes the acyloin condensation reaction between C atoms 2 and 3 of pyruvate and glyceraldehyde 3-phosphate to yield 1-deoxy-D-xylulose-5-phosphate (DXP). In Francisella tularensis subsp. tularensis (strain FSC 198), this protein is 1-deoxy-D-xylulose-5-phosphate synthase.